The following is a 546-amino-acid chain: EH domain-containing protein 2 (546 aa).

EF-hand domains are found at residues 15–50 (EHQKIYKEWFNIADSDGDGRVSGNDATKFFAMSKLS) and 51–84 (RQELKQVWAVADSKRQGFLGLSEFITAMKLVSLA). The EH domain occupies 16-94 (HQKIYKEWFN…QEGHEITSDL (79 aa)). Asp28, Asp30, Asp32, Arg34, Asp39, Asp62, and Glu73 together coordinate Ca(2+). The Dynamin-type G domain occupies 194–430 (FDAKPMVMLL…LLADLMDVPK (237 aa)). The segment at 204-211 (GQYSTGKT) is G1 motif. 204–211 (GQYSTGKT) is a binding site for GTP. The segment at 230-231 (EP) is G2 motif. The tract at residues 292–295 (DTPG) is G3 motif. GTP contacts are provided by residues 292–296 (DTPGV) and Lys359. Residues 358 to 361 (NKAD) are G4 motif. A region of interest (G5 motif) is located at residue Val382. 395–398 (SFND) is a GTP binding site. A Nuclear localization signal motif is present at residues 429–436 (PKKACDRK). Residues 467–490 (KSKAQQRLMDNLEEEFGKVQREFH) adopt a coiled-coil conformation.

The protein belongs to the TRAFAC class dynamin-like GTPase superfamily. Dynamin/Fzo/YdjA family. EHD subfamily. Homooligomer, and heterooligomer with EHD1. Interacts with AP-4 complex subunit sigma (At2g19790).

The protein localises to the endosome membrane. It localises to the cell membrane. The protein resides in the nucleus. Its subcellular location is the cytoplasm. It carries out the reaction GTP + H2O = GDP + phosphate + H(+). Its function is as follows. Involved in endocytosis negative regulation, probably by influencing actin organization. Acts in early endocytic membrane fusion and membrane trafficking of recycling endosomes. Exhibits an inhibitory effect on endocytosis when over-expressed. In Arabidopsis thaliana (Mouse-ear cress), this protein is EH domain-containing protein 2.